Here is an 84-residue protein sequence, read N- to C-terminus: Cytochrome b559 subunit alpha (84 aa).

A helical membrane pass occupies residues 21 to 35 (VIHSITIPSLFIAGW). His-23 serves as a coordination point for heme.

It belongs to the PsbE/PsbF family. As to quaternary structure, heterodimer of an alpha subunit and a beta subunit. PSII is composed of 1 copy each of membrane proteins PsbA, PsbB, PsbC, PsbD, PsbE, PsbF, PsbH, PsbI, PsbJ, PsbK, PsbL, PsbM, PsbT, PsbX, PsbY, PsbZ, Psb30/Ycf12, at least 3 peripheral proteins of the oxygen-evolving complex and a large number of cofactors. It forms dimeric complexes. Requires heme b as cofactor.

The protein localises to the plastid membrane. Functionally, this b-type cytochrome is tightly associated with the reaction center of photosystem II (PSII). PSII is a light-driven water:plastoquinone oxidoreductase that uses light energy to abstract electrons from H(2)O, generating O(2) and a proton gradient subsequently used for ATP formation. It consists of a core antenna complex that captures photons, and an electron transfer chain that converts photonic excitation into a charge separation. This Cuscuta gronovii (Common dodder) protein is Cytochrome b559 subunit alpha.